The primary structure comprises 1690 residues: Chromatin-remodeling ATPase INO80 (1690 aa).

Disordered regions lie at residues 1-306 (MSGA…SERE), 395-527 (QAKE…AEAA), and 618-637 (QSRK…QARA). Polar residues-rich tracts occupy residues 30-41 (FYSNNDQYQQHP) and 111-127 (SVLS…STAS). Residues 213–227 (PAPLALAPASAARQS) show a composition bias toward low complexity. 5 stretches are compositionally biased toward basic and acidic residues: residues 253–273 (RLEK…EPKM), 395–407 (QAKE…ERKK), 416–453 (ENTV…ERAQ), 513–524 (SKEQKQAEKDAA), and 621–635 (KWQE…DTQA). A coiled-coil region spans residues 392–468 (AEVQAKEVQD…TKRALEGVTA (77 aa)). Residues 581–706 (IWRDIARKDI…SHFIGRKIKG (126 aa)) form the DBINO domain. Positions 623–694 (QERTNKSMKD…KLNFLISQTE (72 aa)) form a coiled coil. In terms of domain architecture, Helicase ATP-binding spans 830–1002 (VNLYEQGING…WALLHFIMPT (173 aa)). 843-850 (DEMGLGKT) provides a ligand contact to ATP. Residues 953 to 956 (DEAQ) carry the DEAQ box motif. Residues 1403 to 1563 (KLDELLRELK…GVDFNTRNRE (161 aa)) form the Helicase C-terminal domain. The disordered stretch occupies residues 1619-1690 (YHEGEGNFDD…IDGDGGLGPM (72 aa)). Over residues 1656–1672 (KRGRGRGTGKGTSKRAK) the composition is skewed to basic residues. The segment covering 1673-1682 (TTKERLRLID) has biased composition (basic and acidic residues).

It belongs to the SNF2/RAD54 helicase family. Component of the INO80 chromatin-remodeling complex.

The protein localises to the nucleus. The catalysed reaction is ATP + H2O = ADP + phosphate + H(+). In terms of biological role, ATPase component of the INO80 complex which remodels chromatin by shifting nucleosomes and is involved in DNA repair. In Aspergillus terreus (strain NIH 2624 / FGSC A1156), this protein is Chromatin-remodeling ATPase INO80 (ino80).